The sequence spans 400 residues: Subtilisin-like protease 7 (400 aa).

The signal sequence occupies residues 1-20; the sequence is MGFITKAIPLALAAASVING. The propeptide occupies 21 to 119; that stretch reads AEIMETRAGV…IERDARVQIN (99 aa). One can recognise an Inhibitor I9 domain in the interval 36–118; sequence KYIVVMNDGM…YIERDARVQI (83 aa). Asn-58 carries an N-linked (GlcNAc...) asparagine glycan. The 272-residue stretch at 129 to 400 folds into the Peptidase S8 domain; it reads SWGLARVGSK…SKLINNGSGM (272 aa). Catalysis depends on charge relay system residues Asp-161 and His-192. N-linked (GlcNAc...) asparagine glycans are attached at residues Asn-222 and Asn-252. Ser-346 (charge relay system) is an active-site residue. Asn-396 is a glycosylation site (N-linked (GlcNAc...) asparagine).

Belongs to the peptidase S8 family.

It localises to the secreted. Its function is as follows. Secreted subtilisin-like serine protease with keratinolytic activity that contributes to pathogenicity. The chain is Subtilisin-like protease 7 (SUB7) from Arthroderma benhamiae (Trichophyton mentagrophytes).